The sequence spans 316 residues: Transaldolase (316 aa).

The Schiff-base intermediate with substrate role is filled by Lys132.

This sequence belongs to the transaldolase family. Type 1 subfamily. As to quaternary structure, homodimer.

Its subcellular location is the cytoplasm. The catalysed reaction is D-sedoheptulose 7-phosphate + D-glyceraldehyde 3-phosphate = D-erythrose 4-phosphate + beta-D-fructose 6-phosphate. Its pathway is carbohydrate degradation; pentose phosphate pathway; D-glyceraldehyde 3-phosphate and beta-D-fructose 6-phosphate from D-ribose 5-phosphate and D-xylulose 5-phosphate (non-oxidative stage): step 2/3. Transaldolase is important for the balance of metabolites in the pentose-phosphate pathway. The polypeptide is Transaldolase (Vibrio parahaemolyticus serotype O3:K6 (strain RIMD 2210633)).